The primary structure comprises 606 residues: 1-deoxy-D-xylulose-5-phosphate synthase (606 aa).

Thiamine diphosphate contacts are provided by residues His-63 and 104–106 (GHS). Asp-137 is a Mg(2+) binding site. Thiamine diphosphate is bound by residues 138 to 139 (GS), Asn-166, Tyr-273, and Glu-354. Asn-166 contributes to the Mg(2+) binding site.

The protein belongs to the transketolase family. DXPS subfamily. Homodimer. Mg(2+) is required as a cofactor. Requires thiamine diphosphate as cofactor.

The catalysed reaction is D-glyceraldehyde 3-phosphate + pyruvate + H(+) = 1-deoxy-D-xylulose 5-phosphate + CO2. The protein operates within metabolic intermediate biosynthesis; 1-deoxy-D-xylulose 5-phosphate biosynthesis; 1-deoxy-D-xylulose 5-phosphate from D-glyceraldehyde 3-phosphate and pyruvate: step 1/1. Catalyzes the acyloin condensation reaction between C atoms 2 and 3 of pyruvate and glyceraldehyde 3-phosphate to yield 1-deoxy-D-xylulose-5-phosphate (DXP). This chain is 1-deoxy-D-xylulose-5-phosphate synthase, found in Sulfurimonas denitrificans (strain ATCC 33889 / DSM 1251) (Thiomicrospira denitrificans (strain ATCC 33889 / DSM 1251)).